A 315-amino-acid chain; its full sequence is ATP synthase gamma chain (315 aa).

The protein belongs to the ATPase gamma chain family. As to quaternary structure, F-type ATPases have 2 components, CF(1) - the catalytic core - and CF(0) - the membrane proton channel. CF(1) has five subunits: alpha(3), beta(3), gamma(1), delta(1), epsilon(1). CF(0) has three main subunits: a, b and c.

It is found in the cellular thylakoid membrane. Its function is as follows. Produces ATP from ADP in the presence of a proton gradient across the membrane. The gamma chain is believed to be important in regulating ATPase activity and the flow of protons through the CF(0) complex. In Nostoc sp. (strain PCC 7120 / SAG 25.82 / UTEX 2576), this protein is ATP synthase gamma chain.